The primary structure comprises 63 residues: uncharacterized protein (63 aa).

This is an uncharacterized protein from Archaeoglobus fulgidus (strain ATCC 49558 / DSM 4304 / JCM 9628 / NBRC 100126 / VC-16).